A 392-amino-acid chain; its full sequence is Succinate--CoA ligase [ADP-forming] subunit beta (392 aa).

One can recognise an ATP-grasp domain in the interval 9 to 244; sequence KALLAQYGVG…LSEEESSEIE (236 aa). ATP-binding positions include Lys46, 53–55, Glu99, Leu102, and Glu107; that span reads GRG. Positions 199 and 213 each coordinate Mg(2+). Residues Asn264 and 321 to 323 contribute to the substrate site; that span reads GIV.

It belongs to the succinate/malate CoA ligase beta subunit family. In terms of assembly, heterotetramer of two alpha and two beta subunits. Mg(2+) serves as cofactor.

It catalyses the reaction succinate + ATP + CoA = succinyl-CoA + ADP + phosphate. It carries out the reaction GTP + succinate + CoA = succinyl-CoA + GDP + phosphate. The protein operates within carbohydrate metabolism; tricarboxylic acid cycle; succinate from succinyl-CoA (ligase route): step 1/1. In terms of biological role, succinyl-CoA synthetase functions in the citric acid cycle (TCA), coupling the hydrolysis of succinyl-CoA to the synthesis of either ATP or GTP and thus represents the only step of substrate-level phosphorylation in the TCA. The beta subunit provides nucleotide specificity of the enzyme and binds the substrate succinate, while the binding sites for coenzyme A and phosphate are found in the alpha subunit. This chain is Succinate--CoA ligase [ADP-forming] subunit beta, found in Wolinella succinogenes (strain ATCC 29543 / DSM 1740 / CCUG 13145 / JCM 31913 / LMG 7466 / NCTC 11488 / FDC 602W) (Vibrio succinogenes).